Reading from the N-terminus, the 229-residue chain is GTP:AMP phosphotransferase (229 aa).

G10–T15 contributes to the a ribonucleoside 5'-triphosphate binding site. Residues N30–V59 form an NMP region. AMP contacts are provided by residues R36, N57 to V59, G87, G87 to R90, and Q94. The tract at residues G123–D170 is LID. Residue R178 coordinates AMP.

It belongs to the adenylate kinase family.

The protein resides in the mitochondrion. It catalyses the reaction a ribonucleoside 5'-triphosphate + AMP = a ribonucleoside 5'-diphosphate + ADP. It carries out the reaction GTP + AMP = GDP + ADP. Its activity is regulated as follows. Inhibited by the dinucleoside pentaphosphate compound P1,P5-di(guanosine-5') pentaphosphate (GP5A). Its function is as follows. Catalyzes the reversible transfer of the terminal phosphate group between GTP and AMP. Has very low activity with UTP, ITP, CTP and IMP and no activity with ATP, GMP, CMP and UMP in vitro. This Plasmodium falciparum (isolate 3D7) protein is GTP:AMP phosphotransferase.